A 771-amino-acid chain; its full sequence is Assimilatory nitrate reductase electron transfer subunit (771 aa).

43-79 (YNRILLSSVLQGEASLDDITLNSKDWYDKHGITLYTG) provides a ligand contact to FAD. [2Fe-2S] cluster contacts are provided by Cys-414, Cys-416, Cys-449, and Cys-452.

It depends on FAD as a cofactor. Requires [2Fe-2S] cluster as cofactor.

Its function is as follows. Required for nitrate assimilation. The chain is Assimilatory nitrate reductase electron transfer subunit (nasB) from Bacillus subtilis (strain 168).